The sequence spans 149 residues: Nucleoside diphosphate kinase (149 aa).

ATP is bound by residues lysine 11, phenylalanine 59, arginine 87, threonine 93, arginine 104, and asparagine 114. Residue histidine 117 is the Pros-phosphohistidine intermediate of the active site.

This sequence belongs to the NDK family. As to quaternary structure, homotetramer. Mg(2+) serves as cofactor.

It localises to the cytoplasm. It catalyses the reaction a 2'-deoxyribonucleoside 5'-diphosphate + ATP = a 2'-deoxyribonucleoside 5'-triphosphate + ADP. The catalysed reaction is a ribonucleoside 5'-diphosphate + ATP = a ribonucleoside 5'-triphosphate + ADP. In terms of biological role, major role in the synthesis of nucleoside triphosphates other than ATP. The ATP gamma phosphate is transferred to the NDP beta phosphate via a ping-pong mechanism, using a phosphorylated active-site intermediate. The protein is Nucleoside diphosphate kinase of Treponema pallidum (strain Nichols).